A 467-amino-acid chain; its full sequence is Glycine--tRNA ligase (467 aa).

Arginine 100 and glutamate 175 together coordinate substrate. ATP is bound by residues 207–209 (RNE), 217–222 (FRTREF), 291–292 (EL), and 335–338 (GADR). 222–226 (FEQME) is a binding site for substrate. 331–335 (EPSLG) provides a ligand contact to substrate.

The protein belongs to the class-II aminoacyl-tRNA synthetase family. Homodimer.

It is found in the cytoplasm. It carries out the reaction tRNA(Gly) + glycine + ATP = glycyl-tRNA(Gly) + AMP + diphosphate. Its function is as follows. Catalyzes the attachment of glycine to tRNA(Gly). The sequence is that of Glycine--tRNA ligase from Clostridium perfringens (strain 13 / Type A).